Here is a 352-residue protein sequence, read N- to C-terminus: Glycerol-1-phosphate dehydrogenase [NAD(P)+] (352 aa).

NAD(+) contacts are provided by residues 98-102 and 120-123; these read GKAID and TAAS. D125 is a binding site for substrate. Residue S129 coordinates NAD(+). Residue D172 coordinates substrate. Residues D172 and H252 each contribute to the Zn(2+) site. Residue H256 participates in substrate binding. H268 lines the Zn(2+) pocket.

This sequence belongs to the glycerol-1-phosphate dehydrogenase family. Requires Zn(2+) as cofactor.

It localises to the cytoplasm. The catalysed reaction is sn-glycerol 1-phosphate + NAD(+) = dihydroxyacetone phosphate + NADH + H(+). The enzyme catalyses sn-glycerol 1-phosphate + NADP(+) = dihydroxyacetone phosphate + NADPH + H(+). It functions in the pathway membrane lipid metabolism; glycerophospholipid metabolism. In terms of biological role, catalyzes the NAD(P)H-dependent reduction of dihydroxyacetonephosphate (DHAP or glycerone phosphate) to glycerol 1-phosphate (G1P). The G1P thus generated is used as the glycerophosphate backbone of phospholipids in the cellular membranes of Archaea. This is Glycerol-1-phosphate dehydrogenase [NAD(P)+] from Haloarcula marismortui (strain ATCC 43049 / DSM 3752 / JCM 8966 / VKM B-1809) (Halobacterium marismortui).